We begin with the raw amino-acid sequence, 412 residues long: Acetylornithine aminotransferase (412 aa).

Pyridoxal 5'-phosphate contacts are provided by residues Gly109 to Ala110 and Phe142. Arg145 contacts N(2)-acetyl-L-ornithine. Asp233–Gln236 provides a ligand contact to pyridoxal 5'-phosphate. Lys262 carries the post-translational modification N6-(pyridoxal phosphate)lysine. Residue Ser289 participates in N(2)-acetyl-L-ornithine binding. Thr290 is a binding site for pyridoxal 5'-phosphate.

It belongs to the class-III pyridoxal-phosphate-dependent aminotransferase family. ArgD subfamily. In terms of assembly, homodimer. Requires pyridoxal 5'-phosphate as cofactor.

It is found in the cytoplasm. It carries out the reaction N(2)-acetyl-L-ornithine + 2-oxoglutarate = N-acetyl-L-glutamate 5-semialdehyde + L-glutamate. It functions in the pathway amino-acid biosynthesis; L-arginine biosynthesis; N(2)-acetyl-L-ornithine from L-glutamate: step 4/4. This chain is Acetylornithine aminotransferase, found in Thermosynechococcus vestitus (strain NIES-2133 / IAM M-273 / BP-1).